A 350-amino-acid chain; its full sequence is Probable arabinogalactan endo-beta-1,4-galactanase A (350 aa).

The first 16 residues, 1–16 (MIYPLLLSALPLLSSA), serve as a signal peptide directing secretion. Residue asparagine 128 is glycosylated (N-linked (GlcNAc...) asparagine). The active-site Proton donor is the glutamate 152. Glutamate 262 serves as the catalytic Nucleophile.

This sequence belongs to the glycosyl hydrolase 53 family.

Its subcellular location is the secreted. It catalyses the reaction The enzyme specifically hydrolyzes (1-&gt;4)-beta-D-galactosidic linkages in type I arabinogalactans.. Its function is as follows. Endogalactanase involved in the degradation of plant cell wall polysaccharides, and more particularly of hairy regions of pectin. In Aspergillus tubingensis, this protein is Probable arabinogalactan endo-beta-1,4-galactanase A (galA).